The chain runs to 187 residues: Adenylate kinase (187 aa).

An ATP-binding site is contributed by 10–15 (GSGKGT). The segment at 30–59 (STGDLLRAEVAAGSPLGVKAKEVMARGDLV) is NMP. Residues threonine 31, arginine 36, 57–59 (DLV), 85–88 (GYPR), and glutamine 92 contribute to the AMP site. The interval 126 to 136 (GRAKAEGREDD) is LID. ATP is bound at residue arginine 127. Positions 133 and 144 each coordinate AMP. Glycine 172 serves as a coordination point for ATP.

The protein belongs to the adenylate kinase family. Monomer.

The protein localises to the cytoplasm. It catalyses the reaction AMP + ATP = 2 ADP. It functions in the pathway purine metabolism; AMP biosynthesis via salvage pathway; AMP from ADP: step 1/1. Its function is as follows. Catalyzes the reversible transfer of the terminal phosphate group between ATP and AMP. Plays an important role in cellular energy homeostasis and in adenine nucleotide metabolism. The protein is Adenylate kinase of Xanthomonas campestris pv. campestris (strain B100).